Consider the following 229-residue polypeptide: ATP-dependent Clp protease proteolytic subunit 1 (229 aa).

Residue serine 129 is the Nucleophile of the active site. Histidine 154 is an active-site residue.

It belongs to the peptidase S14 family. Fourteen ClpP subunits assemble into 2 heptameric rings which stack back to back to give a disk-like structure with a central cavity, resembling the structure of eukaryotic proteasomes.

The protein localises to the cytoplasm. It catalyses the reaction Hydrolysis of proteins to small peptides in the presence of ATP and magnesium. alpha-casein is the usual test substrate. In the absence of ATP, only oligopeptides shorter than five residues are hydrolyzed (such as succinyl-Leu-Tyr-|-NHMec, and Leu-Tyr-Leu-|-Tyr-Trp, in which cleavage of the -Tyr-|-Leu- and -Tyr-|-Trp bonds also occurs).. Cleaves peptides in various proteins in a process that requires ATP hydrolysis. Has a chymotrypsin-like activity. Plays a major role in the degradation of misfolded proteins. The polypeptide is ATP-dependent Clp protease proteolytic subunit 1 (Thermosynechococcus vestitus (strain NIES-2133 / IAM M-273 / BP-1)).